Consider the following 634-residue polypeptide: Kelch-like protein 22 (634 aa).

Alanine 2 carries the N-acetylalanine modification. One can recognise a BTB domain in the interval 50–117; sequence FDVVLVVEGR…IYTSELELSL (68 aa). Kelch repeat units follow at residues 299–349, 350–399, 400–446, 448–493, 494–544, and 545–593; these read CVVG…VLNN, FVYL…VVGK, YIYA…TLQG, MYIT…ALLD, KLFV…VLDN, and RIYV…VLTL. Threonine 463 carries the post-translational modification Phosphothreonine. Tyrosine 466 carries the phosphotyrosine modification. Threonine 475 bears the Phosphothreonine mark. The disordered stretch occupies residues 600–634; it reads EQPRGTPNRSQADADFASEVMSVSDWEEFDNSSED. A Phosphothreonine modification is found at threonine 605. Acidic residues predominate over residues 624–634; sequence DWEEFDNSSED.

As to quaternary structure, component of the BCR(KLHL22) E3 ubiquitin ligase complex, at least composed of CUL3, KLHL22 and RBX1. Interacts with PLK1. Interacts with DEPDC5 (via DEP domain); the interaction depends on amino acid availability. Interacts with YWHAE; required for the nuclear localization of KLHL22 upon amino acid starvation.

The protein localises to the cytoplasm. It is found in the cytosol. Its subcellular location is the cytoskeleton. It localises to the microtubule organizing center. The protein resides in the centrosome. The protein localises to the spindle. It is found in the nucleus. Its subcellular location is the lysosome. The protein operates within protein modification; protein ubiquitination. Its function is as follows. Substrate-specific adapter of a BCR (BTB-CUL3-RBX1) E3 ubiquitin ligase complex required for chromosome alignment and localization of PLK1 at kinetochores. The BCR(KLHL22) ubiquitin ligase complex mediates monoubiquitination of PLK1, leading to PLK1 dissociation from phosphoreceptor proteins and subsequent removal from kinetochores, allowing silencing of the spindle assembly checkpoint (SAC) and chromosome segregation. Monoubiquitination of PLK1 does not lead to PLK1 degradation. The BCR(KLHL22) ubiquitin ligase complex is also responsible for the amino acid-stimulated 'Lys-48' polyubiquitination and proteasomal degradation of DEPDC5. Through the degradation of DEPDC5, releases the GATOR1 complex-mediated inhibition of the TORC1 pathway. It is therefore an amino acid-dependent activator within the amino acid-sensing branch of the TORC1 pathway, indirectly regulating different cellular processes including cell growth and autophagy. This is Kelch-like protein 22 from Rattus norvegicus (Rat).